We begin with the raw amino-acid sequence, 165 residues long: MRFPSIFTAVLFAASSALAAPVNTTTEDETAQIPAEAVIGYLDLEGDFDVAVLPFSNSTNNGLLFINTTIASIAAKEEGVSLDKREAEAWHWLQLKPGQPMYKREAEAEAWHWLQLKPGQPMYKREADAEAWHWLQLKPGQPMYKREADAEAWHWLQLKPGQPMY.

The or 20 signal peptide spans 1 to 19 (MRFPSIFTAVLFAASSALA). Propeptides lie at residues 20–89 (APVN…EAEA), 105–110 (EAEAEA), 126–131 (EADAEA), and 147–152 (EADAEA).

Functionally, the active factor is excreted into the culture medium by haploid cells of the alpha mating type and acts on cells of the opposite mating type (type A). It mediates the conjugation process between the two types by inhibiting the initiation of DNA synthesis in type a cells and synchronizing them with type alpha. This Saccharomyces cerevisiae (strain ATCC 204508 / S288c) (Baker's yeast) protein is Mating factor alpha-1 (MF(ALPHA)1).